Reading from the N-terminus, the 353-residue chain is Ferrochelatase (353 aa).

Basic and acidic residues predominate over residues 1-13; it reads MTLERTGRDEEKA. Positions 1 to 23 are disordered; sequence MTLERTGRDEEKALTQPPSGHSS. Fe cation-binding residues include His223 and Glu304.

It belongs to the ferrochelatase family.

It localises to the cytoplasm. The catalysed reaction is heme b + 2 H(+) = protoporphyrin IX + Fe(2+). It functions in the pathway porphyrin-containing compound metabolism; protoheme biosynthesis; protoheme from protoporphyrin-IX: step 1/1. Functionally, catalyzes the ferrous insertion into protoporphyrin IX. In Chelativorans sp. (strain BNC1), this protein is Ferrochelatase.